Reading from the N-terminus, the 65-residue chain is VRDAYIAKPENCVYECATNEYCNKLCTDNGAESGYCQWVGRYGNACXCIKLPDRVPIRVWGKCHG.

Residues 2 to 64 (RDAYIAKPEN…VPIRVWGKCH (63 aa)) enclose the LCN-type CS-alpha/beta domain. Cystine bridges form between Cys-12–Cys-63, Cys-16–Cys-36, Cys-22–Cys-46, and Cys-26–Cys-48.

The protein belongs to the long (4 C-C) scorpion toxin superfamily. Sodium channel inhibitor family. Alpha subfamily. Expressed by the venom gland.

The protein localises to the secreted. Functionally, binds to sodium channels (Nav) and inhibits the inactivation of the activated channels, thereby blocking neuronal transmission. In Olivierus martensii (Manchurian scorpion), this protein is Neurotoxin BmK-M3.